Here is a 151-residue protein sequence, read N- to C-terminus: Putative pre-16S rRNA nuclease (151 aa).

This sequence belongs to the YqgF nuclease family.

It is found in the cytoplasm. In terms of biological role, could be a nuclease involved in processing of the 5'-end of pre-16S rRNA. The sequence is that of Putative pre-16S rRNA nuclease from Prochlorococcus marinus subsp. pastoris (strain CCMP1986 / NIES-2087 / MED4).